Here is a 204-residue protein sequence, read N- to C-terminus: Inner membrane-spanning protein YciB (204 aa).

The next 5 helical transmembrane spans lie at 48–68 (ILFA…LYFF), 73–93 (FESM…ATLM), 102–122 (WKPT…QLFT), 147–167 (GAWI…AYAF), and 170–190 (AVWV…FVVG).

The protein belongs to the YciB family.

The protein localises to the cell inner membrane. Its function is as follows. Plays a role in cell envelope biogenesis, maintenance of cell envelope integrity and membrane homeostasis. The sequence is that of Inner membrane-spanning protein YciB from Nitrosococcus oceani (strain ATCC 19707 / BCRC 17464 / JCM 30415 / NCIMB 11848 / C-107).